We begin with the raw amino-acid sequence, 239 residues long: UDP-2,3-diacylglucosamine hydrolase (239 aa).

Residues Asp-8, His-10, Asp-41, Asn-79, and His-114 each coordinate Mn(2+). 79 to 80 (NR) is a substrate binding site. Substrate contacts are provided by Asp-122, Ser-160, Asn-164, Lys-167, and His-195. Residues His-195 and His-197 each contribute to the Mn(2+) site.

Belongs to the LpxH family. Mn(2+) is required as a cofactor.

The protein resides in the cell inner membrane. It carries out the reaction UDP-2-N,3-O-bis[(3R)-3-hydroxytetradecanoyl]-alpha-D-glucosamine + H2O = 2-N,3-O-bis[(3R)-3-hydroxytetradecanoyl]-alpha-D-glucosaminyl 1-phosphate + UMP + 2 H(+). The protein operates within glycolipid biosynthesis; lipid IV(A) biosynthesis; lipid IV(A) from (3R)-3-hydroxytetradecanoyl-[acyl-carrier-protein] and UDP-N-acetyl-alpha-D-glucosamine: step 4/6. Its function is as follows. Hydrolyzes the pyrophosphate bond of UDP-2,3-diacylglucosamine to yield 2,3-diacylglucosamine 1-phosphate (lipid X) and UMP by catalyzing the attack of water at the alpha-P atom. Involved in the biosynthesis of lipid A, a phosphorylated glycolipid that anchors the lipopolysaccharide to the outer membrane of the cell. The polypeptide is UDP-2,3-diacylglucosamine hydrolase (Sodalis glossinidius (strain morsitans)).